A 440-amino-acid polypeptide reads, in one-letter code: Transposon TyH3 Gag polyprotein (440 aa).

Polar residues-rich tracts occupy residues 1 to 23, 48 to 60, and 127 to 152; these read MESQQLSQHSPNSHGSACASVTS, TKANSQQTTTPAS, and QSQFPQYPSSVGTPLSTPSPESGNTF. 3 disordered regions span residues 1–93, 126–173, and 352–440; these read MESQ…MMTQ, PQSQ…RPPP, and GSRN…PETY. A compositionally biased stretch (low complexity) spans 153–165; that stretch reads TDSSSADSDMTST. The RNA-binding stretch occupies residues 299-401; that stretch reads NNGIHINNKV…NSKSKTARAH (103 aa). Positions 402 to 418 are enriched in low complexity; that stretch reads NVSTSNNSPSTDNDSIS. Residue serine 416 is modified to Phosphoserine. Over residues 419-428 the composition is skewed to polar residues; the sequence is KSTTEPIQLN. The span at 429 to 440 shows a compositional bias: basic and acidic residues; it reads NKHDLHLRPETY.

In terms of assembly, homotrimer.

The protein resides in the cytoplasm. Its function is as follows. Capsid protein (CA) is the structural component of the virus-like particle (VLP), forming the shell that encapsulates the retrotransposons dimeric RNA genome. The particles are assembled from trimer-clustered units and there are holes in the capsid shells that allow for the diffusion of macromolecules. CA also has nucleocapsid-like chaperone activity, promoting primer tRNA(i)-Met annealing to the multipartite primer-binding site (PBS), dimerization of Ty1 RNA and initiation of reverse transcription. This is Transposon TyH3 Gag polyprotein (TY1A) from Saccharomyces cerevisiae (Baker's yeast).